The sequence spans 369 residues: DNA replication and repair protein RecF (369 aa).

30-37 (GQNAQGKT) lines the ATP pocket.

The protein belongs to the RecF family.

It is found in the cytoplasm. The RecF protein is involved in DNA metabolism; it is required for DNA replication and normal SOS inducibility. RecF binds preferentially to single-stranded, linear DNA. It also seems to bind ATP. In Acetivibrio thermocellus (strain ATCC 27405 / DSM 1237 / JCM 9322 / NBRC 103400 / NCIMB 10682 / NRRL B-4536 / VPI 7372) (Clostridium thermocellum), this protein is DNA replication and repair protein RecF.